We begin with the raw amino-acid sequence, 690 residues long: Methionine--tRNA ligase (690 aa).

The 'HIGH' region signature appears at 12–22; it reads PYANGPLHLGH. Zn(2+)-binding residues include Cys-144, Cys-147, Cys-157, and Cys-160. Positions 333–337 match the 'KMSKS' region motif; it reads QFSKS. Lys-336 serves as a coordination point for ATP. A tRNA-binding domain is found at 535 to 632; that stretch reads KKINIDLMVG…VNADDGSRMK (98 aa).

It belongs to the class-I aminoacyl-tRNA synthetase family. MetG type 1 subfamily. Homodimer. Requires Zn(2+) as cofactor.

It is found in the cytoplasm. It carries out the reaction tRNA(Met) + L-methionine + ATP = L-methionyl-tRNA(Met) + AMP + diphosphate. Its function is as follows. Is required not only for elongation of protein synthesis but also for the initiation of all mRNA translation through initiator tRNA(fMet) aminoacylation. The sequence is that of Methionine--tRNA ligase from Picrophilus torridus (strain ATCC 700027 / DSM 9790 / JCM 10055 / NBRC 100828 / KAW 2/3).